The following is a 192-amino-acid chain: MAP6 domain-containing protein 1 (192 aa).

3 S-palmitoyl cysteine lipidation sites follow: cysteine 5, cysteine 10, and cysteine 11. Residues 36–106 (LESEEPIPGG…RTKPSATPGR (71 aa)) are disordered. Serine 38 carries the phosphoserine modification. Over residues 43-58 (PGGVPSRRGPSPAGSR) the composition is skewed to low complexity. Mn stretches follow at residues 123 to 136 (TTSYRQEFQAWTGV) and 158 to 170 (DGSPRAGFQAPEV). Serine 160 bears the Phosphoserine mark.

This sequence belongs to the STOP family. Interacts with calmodulin. Post-translationally, palmitoylated. Palmitoylation enhances association with microtubules.

The protein localises to the golgi apparatus. It localises to the cytoplasm. It is found in the cytoskeleton. In terms of biological role, may have microtubule-stabilizing activity. The sequence is that of MAP6 domain-containing protein 1 (MAP6D1) from Bos taurus (Bovine).